The sequence spans 147 residues: Calmodulin (147 aa).

EF-hand domains are found at residues 8-43 (EQIA…LGLS), 44-79 (PSEA…QLKC), 81-116 (DSEQ…IGEK), and 120-147 (AEVD…LLSK). Ca(2+)-binding residues include Asp-21, Asp-23, Ser-25, Ser-27, Glu-32, Asp-57, Asp-59, Asn-61, Glu-68, Asp-94, Asn-96, Asp-98, and Glu-105.

The protein belongs to the calmodulin family.

In terms of biological role, calmodulin mediates the control of a large number of enzymes, ion channels and other proteins by Ca(2+). Among the enzymes to be stimulated by the calmodulin-Ca(2+) complex are a number of protein kinases and phosphatases. This chain is Calmodulin (CMD1), found in Kluyveromyces lactis (strain ATCC 8585 / CBS 2359 / DSM 70799 / NBRC 1267 / NRRL Y-1140 / WM37) (Yeast).